The primary structure comprises 347 residues: NADH-ubiquinone oxidoreductase chain 2 (347 aa).

Transmembrane regions (helical) follow at residues 3-23 (PIIF…VMIS), 25-45 (HWLL…PIMM), 67-87 (SMLL…WTVM), 96-116 (MLMT…FWVP), 122-142 (IPLS…MSVL), 145-165 (IFPS…ILIG), 178-198 (IMAY…PYNP), 200-220 (MTLL…TMFM), 239-259 (IMTV…PLSG), 274-294 (NSII…YFYM), and 325-345 (FLPT…MLSV).

Belongs to the complex I subunit 2 family. As to quaternary structure, core subunit of respiratory chain NADH dehydrogenase (Complex I) which is composed of 45 different subunits. Interacts with TMEM242.

It localises to the mitochondrion inner membrane. It carries out the reaction a ubiquinone + NADH + 5 H(+)(in) = a ubiquinol + NAD(+) + 4 H(+)(out). Core subunit of the mitochondrial membrane respiratory chain NADH dehydrogenase (Complex I) which catalyzes electron transfer from NADH through the respiratory chain, using ubiquinone as an electron acceptor. Essential for the catalytic activity and assembly of complex I. In Bos indicus (Zebu), this protein is NADH-ubiquinone oxidoreductase chain 2.